Here is a 152-residue protein sequence, read N- to C-terminus: Ribonuclease H (152 aa).

In terms of domain architecture, RNase H type-1 spans 4–145 (SRSMVEIFSD…CDELARQAIA (142 aa)). The Mg(2+) site is built by aspartate 13, glutamate 51, aspartate 73, and aspartate 137.

The protein belongs to the RNase H family. As to quaternary structure, monomer. The cofactor is Mg(2+).

Its subcellular location is the cytoplasm. The enzyme catalyses Endonucleolytic cleavage to 5'-phosphomonoester.. In terms of biological role, endonuclease that specifically degrades the RNA of RNA-DNA hybrids. In Syntrophotalea carbinolica (strain DSM 2380 / NBRC 103641 / GraBd1) (Pelobacter carbinolicus), this protein is Ribonuclease H.